The primary structure comprises 214 residues: Probable septum site-determining protein MinC (214 aa).

This sequence belongs to the MinC family. Interacts with MinD and FtsZ.

Cell division inhibitor that blocks the formation of polar Z ring septums. Rapidly oscillates between the poles of the cell to destabilize FtsZ filaments that have formed before they mature into polar Z rings. Prevents FtsZ polymerization. The protein is Probable septum site-determining protein MinC of Thermoanaerobacter pseudethanolicus (strain ATCC 33223 / 39E) (Clostridium thermohydrosulfuricum).